The chain runs to 552 residues: Chaperonin GroEL 3 (552 aa).

Residues Thr-30–Pro-33, Lys-51, Asp-87–Thr-91, Gly-415, and Asp-495 each bind ATP.

The protein belongs to the chaperonin (HSP60) family. As to quaternary structure, forms a cylinder of 14 subunits composed of two heptameric rings stacked back-to-back. Interacts with the co-chaperonin GroES.

The protein resides in the cytoplasm. The enzyme catalyses ATP + H2O + a folded polypeptide = ADP + phosphate + an unfolded polypeptide.. Its function is as follows. Together with its co-chaperonin GroES, plays an essential role in assisting protein folding. The GroEL-GroES system forms a nano-cage that allows encapsulation of the non-native substrate proteins and provides a physical environment optimized to promote and accelerate protein folding. In Mesorhizobium japonicum (strain LMG 29417 / CECT 9101 / MAFF 303099) (Mesorhizobium loti (strain MAFF 303099)), this protein is Chaperonin GroEL 3.